The following is a 251-amino-acid chain: Lactose phosphotransferase system repressor (251 aa).

An HTH deoR-type domain is found at 3 to 58; sequence KYDRLDEITKLVNKRGSVRTNEIVEDLNVSDMTVRRDLAELEEKGVLTKIHGGARS. Positions 20-39 form a DNA-binding region, H-T-H motif; that stretch reads VRTNEIVEDLNVSDMTVRRD.

In terms of biological role, repressor of the lactose catabolism operon. Galactose-6-phosphate is the inducer. This is Lactose phosphotransferase system repressor (lacR) from Staphylococcus epidermidis (strain ATCC 35984 / DSM 28319 / BCRC 17069 / CCUG 31568 / BM 3577 / RP62A).